The following is a 1402-amino-acid chain: Phospholipid-transporting ATPase dnf2 (1402 aa).

Transmembrane regions (helical) follow at residues 109 to 129, 135 to 155, 457 to 477, and 501 to 521; these read FQNV…ISIF, PGLA…KDAI, LNFI…GIAW, and VVTF…SLYI. Catalysis depends on Asp-569, which acts as the 4-aspartylphosphate intermediate. ATP is bound by residues Asp-569, Lys-570, Thr-571, Glu-700, Phe-741, Ser-743, Lys-746, Lys-764, Arg-799, Thr-800, Thr-879, Gly-880, Asp-881, Arg-986, and Lys-992. Residue Asp-569 coordinates Mg(2+). Thr-571 serves as a coordination point for Mg(2+). Residue Asp-1012 participates in Mg(2+) binding. ATP-binding residues include Asn-1015 and Asp-1016. Residue Asp-1016 coordinates Mg(2+). 6 consecutive transmembrane segments (helical) span residues 1066–1086, 1101–1121, 1151–1171, 1193–1213, 1218–1238, and 1260–1280; these read VAEM…TLFW, YTYV…VMGV, IFIG…FFSF, LGVY…ILNQ, VFSI…TGVY, and FWAV…LFMT. Lys-1275 contributes to the a 1,2-diacyl-sn-glycero-3-phospho-L-serine binding site.

This sequence belongs to the cation transport ATPase (P-type) (TC 3.A.3) family. Type IV subfamily. Mg(2+) is required as a cofactor.

It is found in the cell membrane. The protein localises to the endoplasmic reticulum membrane. The catalysed reaction is ATP + H2O + phospholipidSide 1 = ADP + phosphate + phospholipidSide 2.. It carries out the reaction a 1,2-diacyl-sn-glycero-3-phosphoethanolamine(out) + ATP + H2O = a 1,2-diacyl-sn-glycero-3-phosphoethanolamine(in) + ADP + phosphate + H(+). It catalyses the reaction a 1,2-diacyl-sn-glycero-3-phosphocholine(out) + ATP + H2O = a 1,2-diacyl-sn-glycero-3-phosphocholine(in) + ADP + phosphate + H(+). The enzyme catalyses a beta-D-glucosyl-(1&lt;-&gt;1')-N-acylsphing-4-enine(out) + ATP + H2O = a beta-D-glucosyl-(1&lt;-&gt;1')-N-acylsphing-4-enine(in) + ADP + phosphate + H(+). The catalysed reaction is a 1,2-diacyl-sn-glycero-3-phospho-L-serine(out) + ATP + H2O = a 1,2-diacyl-sn-glycero-3-phospho-L-serine(in) + ADP + phosphate + H(+). Functionally, catalytic component of a P4-ATPase flippase complex which catalyzes the hydrolysis of ATP coupled to the transport of glucosylceramide, phosphatidylcholine, phosphatidylethanolamine, and small amounts of phosphatidylserine from the lumenal to the cytosolic leaflet of the cell membrane and ensures the maintenance of asymmetric distribution of phospholipids. This Schizosaccharomyces pombe (strain 972 / ATCC 24843) (Fission yeast) protein is Phospholipid-transporting ATPase dnf2.